We begin with the raw amino-acid sequence, 512 residues long: Oryzalexin E synthase (512 aa).

A helical transmembrane segment spans residues 6–26; the sequence is SELWMTAVATCMSLLLYLTIL. Cys452 provides a ligand contact to heme.

This sequence belongs to the cytochrome P450 family. Heme serves as cofactor.

Its subcellular location is the membrane. The catalysed reaction is ent-sandaracopimaradien-3beta-ol + reduced [NADPH--hemoprotein reductase] + O2 = oryzalexin E + oxidized [NADPH--hemoprotein reductase] + H2O + H(+). Its function is as follows. Enzyme of the diterpenoid metabolism involved in the biosynthesis of the oryzalexin class of phytoalexins. Can use ent-sandaracopimaradien and syn-stemodene as substrates, but no activity with syn-stemoden-19-oic acid. Hydroxylates 3-alpha-hydroxy-ent-sandaracopimaradiene at C-9-beta, resulting in a 3-alpha,9-beta-diol corresponding to oryzalexins E. The polypeptide is Oryzalexin E synthase (Oryza sativa subsp. japonica (Rice)).